The sequence spans 253 residues: HTH-type transcriptional regulator YdeO (253 aa).

Positions 137–233 (GKVRNIVNMK…GNSPKRVSKE (97 aa)) constitute an HTH araC/xylS-type domain. 2 DNA-binding regions (H-T-H motif) span residues 154 to 175 (KDICDCLYISESLLKKKLKQEQ) and 200 to 223 (VNKIAEQCGYASTSYFIYAFRKHF).

Functionally, induces the expression of gadE and mdtEF. Could also regulate the expression of other genes involved in acid resistance. The chain is HTH-type transcriptional regulator YdeO (ydeO) from Escherichia coli (strain K12).